We begin with the raw amino-acid sequence, 122 residues long: MKTVAFLAVVVLFAAFACASCSSSYAAPAPAAAPASSYSSVPAPPCPKNYLFSCQPNLVPAPCAQQAAPAAYGSAGAYTEQVPSYIGFAPYQQLQQYHQRIGNAALIDELRSLGQGIQGQQY.

An N-terminal signal peptide occupies residues 1–19; it reads MKTVAFLAVVVLFAAFACA. Residues 40-79 form the VM domain; that stretch reads SVPAPPCPKNYLFSCQPNLVPAPCAQQAAPAAYGSAGAYT.

This sequence belongs to the vitelline membrane family.

Its subcellular location is the secreted. Major early eggshell protein. The sequence is that of Vitelline membrane protein Vm32E from Drosophila persimilis (Fruit fly).